The following is a 260-amino-acid chain: Indole-3-glycerol phosphate synthase (260 aa).

It belongs to the TrpC family.

The catalysed reaction is 1-(2-carboxyphenylamino)-1-deoxy-D-ribulose 5-phosphate + H(+) = (1S,2R)-1-C-(indol-3-yl)glycerol 3-phosphate + CO2 + H2O. It functions in the pathway amino-acid biosynthesis; L-tryptophan biosynthesis; L-tryptophan from chorismate: step 4/5. This chain is Indole-3-glycerol phosphate synthase, found in Lactiplantibacillus plantarum (strain ATCC BAA-793 / NCIMB 8826 / WCFS1) (Lactobacillus plantarum).